Reading from the N-terminus, the 45-residue chain is MFQLFRTKWFRSAPVVATIWITLTAGIIVEFNRFVPDLLFHPMSF.

The helical transmembrane segment at 9-29 (WFRSAPVVATIWITLTAGIIV) threads the bilayer.

The protein belongs to the PsaJ family.

The protein resides in the cellular thylakoid membrane. Its function is as follows. May help in the organization of the PsaE and PsaF subunits. This chain is Photosystem I reaction center subunit IX 1, found in Prochlorococcus marinus (strain NATL1A).